The chain runs to 230 residues: Oxygen-evolving enhancer protein 3-2, chloroplastic (230 aa).

The transit peptide at 1–49 (MAQAVTSMAGLRGASQAVLEGSLQINGSNRLNISRVSVGSQRTGLVIRA) directs the protein to the chloroplast. The transit peptide at 50–82 (QQNVSVPESSRRSVIGLVAAGLAGGSFVKAVFA) directs the protein to the thylakoid. The residue at position 125 (Ser-125) is a Phosphoserine. Thr-195 is modified (phosphothreonine). Tyr-215 carries the post-translational modification Phosphotyrosine. Phosphoserine is present on Ser-216. Thr-218 is modified (phosphothreonine).

The protein belongs to the PsbQ family.

It is found in the plastid. The protein resides in the chloroplast thylakoid membrane. Its function is as follows. Required for photosystem II assembly/stability and photoautotrophic growth under low light conditions. The protein is Oxygen-evolving enhancer protein 3-2, chloroplastic (PSBQ2) of Arabidopsis thaliana (Mouse-ear cress).